The primary structure comprises 623 residues: Sodium-coupled monocarboxylate transporter 2 (623 aa).

The Extracellular portion of the chain corresponds to 1–10; that stretch reads METVGRFQAG. A helical transmembrane segment spans residues 11 to 31; sequence DYVVFACLFVVSSGIGVFFAI. At 32-50 the chain is on the cytoplasmic side; sequence KERNKAPSKEFLVGGRQMS. Residues 51 to 71 form a helical membrane-spanning segment; the sequence is CGPVALSLTASFMSAVTVIGA. At 72-83 the chain is on the extracellular side; sequence PADVYRFGASYV. Residues 84-104 traverse the membrane as a helical segment; that stretch reads IFGVAYTFVVFFTAELFLPVF. At 105–129 the chain is on the cytoplasmic side; that stretch reads YRSGITSTYEYLELRFCKLVRVAAT. Residues 130-150 form a helical membrane-spanning segment; sequence LIYIIQTILYTGVVVYAPALA. Over 151 to 158 the chain is Extracellular; sequence LNQVTGFD. A helical transmembrane segment spans residues 159 to 179; sequence LWGSIFATGIVCTFYCTLGGL. At 180 to 181 the chain is on the cytoplasmic side; sequence KA. The helical transmembrane segment at 182-202 threads the bilayer; it reads VVWTDAFQMVVMVVGFLTVLI. At 203–236 the chain is on the extracellular side; that stretch reads QGSSRAGGIENVWSTSRTGGRLQVFDFDVSPLRR. Residues 237 to 257 traverse the membrane as a helical segment; the sequence is HTFWTLSVGGTFTWLGIYGVN. Over 258–276 the chain is Cytoplasmic; that stretch reads QSTIQRCISCKTEGHARWA. Residues 277–297 form a helical membrane-spanning segment; sequence LYLNLLGLWIILFCAVVSGLI. The Extracellular portion of the chain corresponds to 298 to 322; that stretch reads MYSYYSHCDPWSSGLISAPDQLMPY. The chain crosses the membrane as a helical span at residues 323-343; it reads FVMEILGAFPGLPGLFVACAF. Over 344–386 the chain is Cytoplasmic; that stretch reads SGTLSTVAASINALATVMYEDFVSQCFPDLSNRAASWISKALC. Residues 387–407 traverse the membrane as a helical segment; it reads VAFGVACTTMAVAASYMGGIV. Residues 408–412 are Extracellular-facing; that stretch reads QAALS. The helical transmembrane segment at 413–433 threads the bilayer; it reads IHGMCGGPVLGLFSLGILFPF. Over 434-438 the chain is Cytoplasmic; it reads TNLKG. A helical transmembrane segment spans residues 439 to 459; the sequence is AVGGLIVGISLSFWVGVGAFI. The Extracellular segment spans residues 460–510; it reads YPAPSNNTHALELNTAGCNITAAAFEPTSATVTQLTSDRNWLADSWYSMSY. Asparagine 465 and asparagine 478 each carry an N-linked (GlcNAc...) asparagine glycan. A helical membrane pass occupies residues 511–531; sequence LYYSAVGFIGTVAAGLLITLL. Residues 532–623 lie on the Cytoplasmic side of the membrane; it reads TGPMDPKLLK…NETSIVQKKL (92 aa).

Belongs to the sodium:solute symporter (SSF) (TC 2.A.21) family.

The protein localises to the apical cell membrane. The enzyme catalyses (S)-lactate(out) + Na(+)(out) = (S)-lactate(in) + Na(+)(in). It catalyses the reaction nicotinate(out) + Na(+)(out) = nicotinate(in) + Na(+)(in). The catalysed reaction is pyruvate(out) + Na(+)(out) = pyruvate(in) + Na(+)(in). It carries out the reaction propanoate(out) + Na(+)(out) = propanoate(in) + Na(+)(in). The enzyme catalyses butanoate(out) + Na(+)(out) = butanoate(in) + Na(+)(in). It catalyses the reaction acetoacetate(out) + Na(+)(out) = acetoacetate(in) + Na(+)(in). Its function is as follows. Acts as an electroneutral and low-affinity sodium (Na(+))-dependent sodium-coupled solute transporter. Catalyzes the transport across the plasma membrane of many monocarboxylates such as lactate, pyruvate, nicotinate, propionate, butyrate and beta-D-hydroxybutyrate. The sequence is that of Sodium-coupled monocarboxylate transporter 2 (slc5a12) from Danio rerio (Zebrafish).